The following is a 401-amino-acid chain: Tetracycline resistance protein, class B (401 aa).

Topologically, residues 1 to 6 are cytoplasmic; sequence MNSSTK. Residues 7–30 form a helical membrane-spanning segment; sequence IALVITLLDAMGIGLIMPVLPTLL. Residues 31-42 lie on the Periplasmic side of the membrane; sequence REFIASEDIANH. The helical transmembrane segment at 43-61 threads the bilayer; that stretch reads FGVLLALYALMQVIFAPWL. Over 62 to 71 the chain is Cytoplasmic; it reads GKMSDRFGRR. The chain crosses the membrane as a helical span at residues 72–91; that stretch reads PVLLLSLIGASLDYLLLAFS. At 92–98 the chain is on the periplasmic side; sequence SALWMLY. Residues 99–119 form a helical membrane-spanning segment; that stretch reads LGRLLSGITGATGAVAASVIA. At 120–129 the chain is on the cytoplasmic side; the sequence is DTTSASQRVK. The chain crosses the membrane as a helical span at residues 130–152; that stretch reads WFGWLGASFGLGLIAGPIIGGFA. Residues 153-158 lie on the Periplasmic side of the membrane; sequence GEISPH. The helical transmembrane segment at 159 to 178 threads the bilayer; it reads SPFFIAALLNIVTFLVVMFW. Residues 179–211 are Cytoplasmic-facing; sequence FRETKNTRDNTDTEVGVETQSNSVYITLFKTMP. Residues 212 to 232 form a helical membrane-spanning segment; it reads ILLIIYFSAQLIGQIPATVWV. Topologically, residues 233 to 243 are periplasmic; it reads LFTENRFGWNS. Residues 244–265 traverse the membrane as a helical segment; the sequence is MMVGFSLAGLGLLHSVFQAFVA. The Cytoplasmic portion of the chain corresponds to 266 to 275; it reads GRIATKWGEK. Residues 276-295 form a helical membrane-spanning segment; that stretch reads TAVLLGFIADSSAFAFLAFI. Residues 296–298 lie on the Periplasmic side of the membrane; it reads SEG. The helical transmembrane segment at 299–322 threads the bilayer; sequence WLVFPVLILLAGGGIALPALQGVM. Residues 323–332 lie on the Cytoplasmic side of the membrane; that stretch reads SIQTKSHQQG. Residues 333 to 356 traverse the membrane as a helical segment; it reads ALQGLLVSLTNATGVIGPLLFAVI. Residues 357-365 lie on the Periplasmic side of the membrane; it reads YNHSLPIWD. Residues 366–387 form a helical membrane-spanning segment; that stretch reads GWIWIIGLAFYCIIILLSMTFM. Over 388-401 the chain is Cytoplasmic; that stretch reads LTPQAQGSKQETSA.

It belongs to the major facilitator superfamily. TCR/Tet family.

Its subcellular location is the cell inner membrane. Resistance to tetracycline by an active tetracycline efflux. This is an energy-dependent process that decreases the accumulation of the antibiotic in whole cells. This protein functions as a metal-tetracycline/H(+) antiporter. The sequence is that of Tetracycline resistance protein, class B (tetA) from Escherichia coli.